The primary structure comprises 57 residues: Putative secreted protein MT0250 (57 aa).

The N-terminal stretch at 1 to 32 is a signal peptide; it reads MNRIVAPAAASVVVGLLLGAAAIFGVTLMVQQ. Residues 34-57 form a disordered region; that stretch reads KKPPLPGGDPSSSVLNRVEYGNRS.

The sequence is that of Putative secreted protein MT0250 from Mycobacterium tuberculosis (strain CDC 1551 / Oshkosh).